The following is a 205-amino-acid chain: Large ribosomal subunit protein uL4 (205 aa).

The tract at residues 65–99 (RQKGTGGARHGSRKSPTFRHGGVYKGPTPRSHGHD) is disordered.

Belongs to the universal ribosomal protein uL4 family. In terms of assembly, part of the 50S ribosomal subunit.

Its function is as follows. One of the primary rRNA binding proteins, this protein initially binds near the 5'-end of the 23S rRNA. It is important during the early stages of 50S assembly. It makes multiple contacts with different domains of the 23S rRNA in the assembled 50S subunit and ribosome. Functionally, forms part of the polypeptide exit tunnel. This chain is Large ribosomal subunit protein uL4, found in Ruegeria pomeroyi (strain ATCC 700808 / DSM 15171 / DSS-3) (Silicibacter pomeroyi).